The sequence spans 30 residues: Trypsin inhibitor 4 (30 aa).

Disulfide bonds link C3–C20, C10–C22, and C16–C29.

It belongs to the protease inhibitor I7 (squash-type serine protease inhibitor) family.

The protein resides in the secreted. Its function is as follows. Inhibits trypsin. This is Trypsin inhibitor 4 from Cucumis sativus (Cucumber).